The chain runs to 185 residues: Ribosome-recycling factor (185 aa).

It belongs to the RRF family.

It localises to the cytoplasm. Functionally, responsible for the release of ribosomes from messenger RNA at the termination of protein biosynthesis. May increase the efficiency of translation by recycling ribosomes from one round of translation to another. The protein is Ribosome-recycling factor of Nitrosomonas eutropha (strain DSM 101675 / C91 / Nm57).